The sequence spans 345 residues: V-type proton ATPase subunit d (345 aa).

Met1 is subject to N-acetylmethionine.

Belongs to the V-ATPase V0D/AC39 subunit family. In terms of assembly, V-ATPase is a heteromultimeric enzyme composed of a peripheral catalytic V1 complex (components A to H) attached to an integral membrane V0 proton pore complex (components: a, c, c', c'', d, e, f and VOA1).

Its subcellular location is the vacuole membrane. In terms of biological role, subunit of the V0 complex of vacuolar(H+)-ATPase (V-ATPase), a multisubunit enzyme composed of a peripheral complex (V1) that hydrolyzes ATP and a membrane integral complex (V0) that translocates protons. V-ATPase is responsible for acidifying and maintaining the pH of intracellular compartments. This subunit is a non-integral membrane component of the membrane pore domain and is required for proper assembly of the V0 sector. Might be involved in the regulated assembly of V1 subunits onto the membrane sector or alternatively may prevent the passage of protons through V0 pores. This is V-type proton ATPase subunit d from Saccharomyces cerevisiae (strain ATCC 204508 / S288c) (Baker's yeast).